The sequence spans 1035 residues: NACHT, LRR and PYD domains-containing protein 3 (1035 aa).

The 93-residue stretch at 1-93 folds into the Pyrin domain; the sequence is MKMASTRCKL…YEKAKRDEPK (93 aa). A Phosphoserine modification is found at S5. A disulfide bridge links C8 with C108. Y13 is subject to Phosphotyrosine. C130 carries S-palmitoyl cysteine lipidation. A required for binding to phosphatidylinositol 4-phosphate (PtdIns4P) region spans residues 131–134; that stretch reads KKKK. Phosphotyrosine is present on residues Y136, Y140, and Y143. The FISNA domain occupies 140 to 210; it reads YRKYVRSRFQ…SPIKMELLFD (71 aa). Phosphoserine occurs at positions 161 and 163. Y168 is modified (phosphotyrosine). T169 serves as a coordination point for ATP. Residues S198 and S201 each carry the phosphoserine modification. The region spanning 220-536 is the NACHT domain; it reads HTVVFQGAAG…EFFAAMYYLL (317 aa). ATP is bound at residue 226–233; it reads GAAGIGKT. Phosphoserine occurs at positions 265 and 295. Residue K324 forms a Glycyl lysine isopeptide (Lys-Gly) (interchain with G-Cter in ubiquitin) linkage. Phosphoserine is present on S334. The KFERQ-like motif 1 signature appears at 355-359; the sequence is LEKLQ. K430 is covalently cross-linked (Glycyl lysine isopeptide (Lys-Gly) (interchain with G-Cter in ubiquitin)). H522 contacts ATP. Residues 603–607 carry the KFERQ-like motif 2 motif; that stretch reads QIRLE. K689 participates in a covalent cross-link: Glycyl lysine isopeptide (Lys-Gly) (interchain with G-Cter in ubiquitin). Residues S727 and S734 each carry the phosphoserine modification. 5 LRR repeats span residues 741–761, 770–791, 798–818, 827–848, and 855–875; these read SLTELDLSDNSLGDPGMRVLC, NIRRLWLGRCGLSHECCFDISL, KLVELDLSDNALGDFGIRLLC, NLKKLWLVSCCLTSACCQDLAS, and SLTRLYVGENALGDAGVAILC. A KFERQ-like motif 3 motif is present at residues 797–801; that stretch reads QKLVE. At S805 the chain carries Phosphoserine. Residues C836, C837, and C843 are each lipidated (S-palmitoyl cysteine). Phosphotyrosine is present on Y860. K877 participates in a covalent cross-link: Glycyl lysine isopeptide (Lys-Gly) (interchain with G-Cter in ubiquitin). 4 LRR repeats span residues 884–905, 912–932, 941–962, and 969–990; these read NLQKLGLVNSGLTSACCSALSS, NLTHLYLRGNTLGDKGIKLLC, KLQVLELDNCNLTSHCCWDLST, and SLRKLSLGNNDLGDLGVMMFCE. Residue K926 forms a Glycyl lysine isopeptide (Lys-Gly) (interchain with G-Cter in ubiquitin) linkage. Residue C957 is the site of S-palmitoyl cysteine attachment. A Glycyl lysine isopeptide (Lys-Gly) (interchain with G-Cter in ubiquitin) cross-link involves residue K972. S974 carries the phosphoserine modification. A KFERQ-like motif 4 motif is present at residues 990–994; that stretch reads EVLKQ. A Phosphoserine modification is found at S1034.

The protein belongs to the NLRP family. Sensor component of NLRP3 inflammasomes; inflammasomes are supramolecular complexes that assemble in the cytosol in response to pathogens and other damage-associated signals and play critical roles in innate immunity and inflammation. The core of NLRP3 inflammasomes consists of a signal sensor component (NLRP3), an adapter (PYCARD/ASC), which recruits an effector pro-inflammatory caspase (CASP1 and, possibly, CASP4 and CASP5). Homodecamer; inactive NLRP3 forms homodecameric double-ring cages that hide pyrin domains within NACHT-LRR rings to avoid premature activation. Interacts (via pyrin domain) with PYCARD/ASC (via pyrin domain); interaction is direct. Interacts (via LRR repeat domain) with NEK7 (via N-terminus); the interaction is required for the formation of the complex NLRP3:PYCARD, oligomerization of PYCARD/ASC and activation of CASP1. Interacts (via LRR repeat domain) with NR4A1/Nur77 (via N-terminus); the interaction is direct, requires activation of NR4A1 by its ligands NBRE-containing dsDNA and lipopolysaccharide, and stimulates the association of NLRP3 with NEK7 for non-canonical NLRP3 inflammasome activation. Interacts with CARD8; leading to inhibit formation of the NLRP3 inflammasome. Interacts with MEFV; this interaction targets NLRP3 to degradation by autophagy, hence preventing excessive IL1B- and IL18-mediated inflammation. Interacts with EIF2AK2/PKR; this interaction requires EIF2AK2 activity, is accompanied by EIF2AK2 autophosphorylation and promotes inflammasome assembly in response to specific stimuli. Interacts with GBP5 (via DAPIN domain); this interaction promotes inflammasome assembly in response to microbial and soluble, but not crystalline, agents. Interacts with PML (isoform PML-1) (via the leucine-rich repeat (LRR) domain); PML-mediated increase in NLRP3 inflammasome activation does not depend upon this interaction. Interacts (via NACHT domain) with DHX33 (via DEAH box); NLRP3 activation in presence of cytosolic dsRNA is mediated by DHX33. Interacts (via NACHT and LRR domains) with ARRB2; this interaction is direct and inducible by polyunsaturated fatty acids (PUFAs). Interacts (via NACHT domain) with DDX3X under both LPS-primed and inflammasome-activating conditions. Interacts with IRF4 (via the LRR domain); this interaction is direct and is required for optimal IRF4 binding to IL4 promoter and efficient IL4 transactivation during differentiation of Th2 helper T-cells. Interacts with MAVS; promoting localization to mitochondria and activation of the NLRP3 inflammasome. Interacts with MARK4; promoting localization of NLRP3 to the microtubule organizing center (MTOC). Interacts with TRIM50; this interaction also promotes NLRP3 oligomerization and subsequent inflammasome activation. Interacts with IRGM; preventing NLRP3 inflammasome assembly and promoting NLRP3 degradation. Interacts (via KFERQ-like motifs) with HSPA8/HSC70; promoting NLRP3 degradation by the chaperone-mediated autophagy pathway. Interacts (via NACHT and LLR domains) with ABHD8; this interaction is enhanced in the presence of NLRP3 inflammasome inducers, such as ATP, nigericin, silica, or alum. Interaction with ABHD8 leads the recruitment of ZDHHC12, hence facilitating NLRP3 palmitoylation and degradation by the chaperone-mediated autophagy pathway (CMA), therefore attenuating NLRP3 inflammasome activation. Post-translationally, the disulfide bond in the pyrin domain might play a role in reactive oxygen species-mediated activation. In terms of processing, phosphorylation at Ser-198 by MAPK8/JNK1 increases inflammasome activation by promoting deubiquitination by BRCC3 and NLRP3 homooligomerization. Phosphorylation at Ser-805 by CSNK1A1 prevents inflammasome activation by preventing NEK7 recruitment. Phosphorylation at Ser-5 in the pyrin domain inhibits homomultimerization of NLRP3 and activation of the NLRP3 inflammasome: dephosphorylation by protein phosphatase 2A (PP2A) promotes assembly of the NLRP3 inflammasome. Phosphorylation at Ser-295 by PKD/PRKD1 promotes NLRP3 inflammasome assembly. Phosphorylation by ERK1/MAPK3 promotes NLRP3 inflammasome assembly. Phosphorylation by BTK (at Tyr-136, Tyr-140, Tyr-143 and Tyr-168) in the region that mediates binding to phosphatidylinositol phosphate, promotes relocalization of NLRP3 and assembly of the NLRP3 inflammasome. Phosphorylation at Tyr-860 inhibits NLRP3 inflammasome assembly: dephosphorylation by PTPN22 promotes inflammasome activation. Phosphorylated by LATS1 and LATS2 at Ser-265 following palmitoylation by ZDHHC1, promoting its relocalization to the microtubule organizing center (MTOC), where NLRP3 is activated by NEK7, leading to inflammasome assembly and activation. Ubiquitinated; undergoes both 'Lys-48'- and 'Lys-63'-linked polyubiquitination. Ubiquitination does not lead to degradation, but inhibits inflammasome activation. Deubiquitination is catalyzed by BRCC3 and associated with NLRP3 activation and inflammasome assembly. This process can be induced by the activation of Toll-like receptors (by LPS), through a non-transcriptional pathway dependent on the mitochondrial production of reactive oxygen species, and by ATP. Ubiquitinated by TRIM31 via 'Lys-48'-linked ubiquitination, leading to its degradation by the proteasome. Ubiquitinated at Lys-689 by the SCF(FBXL2) complex, leading to its degradation by the proteasome. Ubiquitinated by TRIM35 via 'lys-48' and 'Lys-63'-linked ubiquitination leading to inhibition of NLRP3 inflammasome activation. Undergoes 'Lys-27'-linked polyubiquitination by MARCHF5, leading to NLRP3-NEK7 complex formation and NLRP3 oligomerization. Post-translationally, palmitoylation by ZDHHC12 promotes NLRP3 degradation by the chaperone-mediated autophagy pathway (CMA) and therefore limits NLRP3 inflammasome activation. Interaction with ZDHHC12, and hence NLRP3 palmitoylation, is greatly enhanced by ABHD8. Following palmitoylation, HSPA8/HSC70 recognizes and binds the KFERQ-like motifs on NLRP3 and promotes NLRP3 recruitment to lysosomes, where it is degraded via the chaperone-mediated autophagy pathway in a LAMP2-dependent process. Palmitoylation at Cys-836 and Cys-837 by ZDHHC5 enhances its binding to NEK7 leading to inflammasome assembly and activation. Palmitoylation at Cys-130 and Cys-957 by ZDHHC1 facilitates phosphorylation at Ser-265 by LATS1 and LATS2, promoting its relocalization to the microtubule organizing center (MTOC), where NLRP3 is activated by NEK7, leading to inflammasome assembly and activation. Depalmitoylated by ABHD17A. In terms of processing, degraded via selective autophagy following interaction with IRGM. IRGM promotes NLRP3 recruitment to autophagosome membranes, promoting its SQSTM1/p62-dependent autophagy-dependent degradation. Highly expressed in oocyte, testis, spleen, thymus and kidney.

The protein resides in the cytoplasm. Its subcellular location is the cytosol. The protein localises to the inflammasome. It localises to the cytoskeleton. It is found in the microtubule organizing center. The protein resides in the golgi apparatus membrane. Its subcellular location is the endoplasmic reticulum. The protein localises to the mitochondrion. It localises to the secreted. It is found in the nucleus. The catalysed reaction is ATP + H2O = ADP + phosphate + H(+). With respect to regulation, under resting conditions, NLRP3 binds ADP and is autoinhibited. Inactive NLRP3 forms homodecameric double-ring cages that hide pyrin domains within NACHT-LRR rings to avoid premature activation. NLRP3 activation stimuli include extracellular ATP, nigericin, reactive oxygen species, crystals of monosodium urate or cholesterol, amyloid-beta fibers, environmental or industrial particles and nanoparticles, such as asbestos, silica, aluminum salts, cytosolic dsRNA, etc. Almost all stimuli trigger intracellular K(+) efflux. These stimuli lead to membrane perturbations that induce activation of NLRP3. Upon activation, NLRP3 is transported to microtubule organizing center (MTOC), where it is unlocked by NEK7, leading to its relocalization to dispersed trans-Golgi network (dTGN) vesicle membranes and recruitment of PYCARD/ASC for the formation of an active inflammasome complex. NEK7-activated NLRP3 forms a disk-shaped inflammasome. NLRP3 and PYCARD/ASC interact via their respective pyrin domains; interaction initiates speck formation (nucleation) which greatly enhances further addition of soluble PYCARD/ASC molecules to the speck in a prion-like polymerization process. Clustered PYCARD/ASC nucleates the formation of CASP1 filaments through the interaction of their respective CARD domains, acting as a platform for CASP1 polymerization and activation. Active CASP1 then processes IL1B and IL18 precursors, leading to the release of mature cytokines in the extracellular milieu and inflammatory response. NLRP3 inflammasome assembly is inhibited by IRGM, which impedes NLRP3 oligomerization. NLRP3 inflammasome is inhibited by cyclic AMP (cAMP), which directly binds NLRP3; inhibition is relieved by calcium-sensing receptor CASR, which inhibits production of cAMP. Specifically inhibited by sulfonylurea MCC950 (also named CP-456,773, CRID3), a potent and specific small-molecule inhibitor of the NLRP3 inflammasome that acts by preventing ATP hydrolysis. Functionally, sensor component of the NLRP3 inflammasome, which mediates inflammasome activation in response to defects in membrane integrity, leading to secretion of inflammatory cytokines IL1B and IL18 and pyroptosis. In response to pathogens and other damage-associated signals that affect the integrity of membranes, initiates the formation of the inflammasome polymeric complex composed of NLRP3, CASP1 and PYCARD/ASC. Recruitment of pro-caspase-1 (proCASP1) to the NLRP3 inflammasome promotes caspase-1 (CASP1) activation, which subsequently cleaves and activates inflammatory cytokines IL1B and IL18 and gasdermin-D (GSDMD), promoting cytokine secretion and pyroptosis. Activation of NLRP3 inflammasome is also required for HMGB1 secretion; stimulating inflammatory responses. Under resting conditions, ADP-bound NLRP3 is autoinhibited. NLRP3 activation stimuli include extracellular ATP, nigericin, reactive oxygen species, crystals of monosodium urate or cholesterol, amyloid-beta fibers, environmental or industrial particles and nanoparticles, such as asbestos, silica, aluminum salts, cytosolic dsRNA, etc. Almost all stimuli trigger intracellular K(+) efflux. These stimuli lead to membrane perturbation and activation of NLRP3. Upon activation, NLRP3 is transported to microtubule organizing center (MTOC), where it is unlocked by NEK7, leading to its relocalization to dispersed trans-Golgi network (dTGN) vesicle membranes and formation of an active inflammasome complex. Associates with dTGN vesicle membranes by binding to phosphatidylinositol 4-phosphate (PtdIns4P). Shows ATPase activity. Its function is as follows. Independently of inflammasome activation, regulates the differentiation of T helper 2 (Th2) cells and has a role in Th2 cell-dependent asthma and tumor growth. During Th2 differentiation, required for optimal IRF4 binding to IL4 promoter and for IRF4-dependent IL4 transcription. Binds to the consensus DNA sequence 5'-GRRGGNRGAG-3'. May also participate in the transcription of IL5, IL13, GATA3, CCR3, CCR4 and MAF. This Macaca mulatta (Rhesus macaque) protein is NACHT, LRR and PYD domains-containing protein 3 (NLRP3).